Here is a 433-residue protein sequence, read N- to C-terminus: Enolase (433 aa).

Gln-163 is a binding site for (2R)-2-phosphoglycerate. The active-site Proton donor is Glu-205. Mg(2+) is bound by residues Asp-242, Glu-285, and Asp-312. (2R)-2-phosphoglycerate is bound by residues Lys-337, Arg-366, Ser-367, and Lys-388. Lys-337 acts as the Proton acceptor in catalysis.

It belongs to the enolase family. It depends on Mg(2+) as a cofactor.

Its subcellular location is the cytoplasm. It is found in the secreted. The protein resides in the cell surface. The catalysed reaction is (2R)-2-phosphoglycerate = phosphoenolpyruvate + H2O. It functions in the pathway carbohydrate degradation; glycolysis; pyruvate from D-glyceraldehyde 3-phosphate: step 4/5. Functionally, catalyzes the reversible conversion of 2-phosphoglycerate (2-PG) into phosphoenolpyruvate (PEP). It is essential for the degradation of carbohydrates via glycolysis. In Lawsonia intracellularis (strain PHE/MN1-00), this protein is Enolase.